A 385-amino-acid chain; its full sequence is Torsin-3A (385 aa).

An N-terminal signal peptide occupies residues 1-21 (MFLGALWLLLLLPLRPPGAQG). Asparagine 110 is a glycosylation site (N-linked (GlcNAc...) asparagine). 155–162 (GWSGTGKN) lines the ATP pocket.

Belongs to the ClpA/ClpB family. Torsin subfamily. In terms of assembly, interacts with TOR1AIP1. N-glycosylated.

Its subcellular location is the cytoplasm. The protein localises to the endoplasmic reticulum lumen. In Mus musculus (Mouse), this protein is Torsin-3A (Tor3a).